A 436-amino-acid polypeptide reads, in one-letter code: Serine protease hepsin (436 aa).

The disordered stretch occupies residues 1-29; that stretch reads MAKEDEEPGAHRGGSTCSRPQPGKGGRTA. At 1–38 the chain is on the cytoplasmic side; the sequence is MAKEDEEPGAHRGGSTCSRPQPGKGGRTAACCSRPKVA. Residues 39–59 form a helical; Signal-anchor for type II membrane protein membrane-spanning segment; the sequence is ALIVGTLLFLTGIGAASWAIV. Residues 60-436 lie on the Extracellular side of the membrane; that stretch reads TILLQSDQEP…SEASGMVTQP (377 aa). The SRCR domain maps to 73-170; the sequence is VQLSPGDSRL…RGRFLTATCQ (98 aa). Disulfide bonds link C96/C159, C109/C169, C138/C157, C172/C296, C207/C223, C310/C378, C341/C357, and C368/C400. The N-linked (GlcNAc...) asparagine glycan is linked to N131. The Peptidase S1 domain maps to 182 to 424; it reads IVGGQDSSLG…FREWIFKAIK (243 aa). Catalysis depends on charge relay system residues H222 and D276. The active-site Charge relay system is S372.

This sequence belongs to the peptidase S1 family. As to expression, detected in kidney, in thick ascending tubule epithelial cells (at protein level). Detected in kidney and liver.

Its subcellular location is the apical cell membrane. It localises to the cell membrane. It is found in the secreted. The catalysed reaction is Cleavage after basic amino-acid residues, with Arg strongly preferred to Lys.. Its function is as follows. Serine protease that cleaves extracellular substrates, and contributes to the proteolytic processing of growth factors, such as HGF and MST1/HGFL. Plays a role in cell growth and maintenance of cell morphology. Plays a role in the proteolytic processing of ACE2. Mediates the proteolytic cleavage of urinary UMOD that is required for UMOD polymerization. This chain is Serine protease hepsin (Hpn), found in Mus musculus (Mouse).